The primary structure comprises 187 residues: Peptidyl-tRNA hydrolase (187 aa).

Tyr15 provides a ligand contact to tRNA. The active-site Proton acceptor is His20. Residues Phe64, Asn66, and Asn112 each contribute to the tRNA site.

This sequence belongs to the PTH family. As to quaternary structure, monomer.

Its subcellular location is the cytoplasm. It catalyses the reaction an N-acyl-L-alpha-aminoacyl-tRNA + H2O = an N-acyl-L-amino acid + a tRNA + H(+). Its function is as follows. Hydrolyzes ribosome-free peptidyl-tRNAs (with 1 or more amino acids incorporated), which drop off the ribosome during protein synthesis, or as a result of ribosome stalling. Functionally, catalyzes the release of premature peptidyl moieties from peptidyl-tRNA molecules trapped in stalled 50S ribosomal subunits, and thus maintains levels of free tRNAs and 50S ribosomes. This is Peptidyl-tRNA hydrolase from Parabacteroides distasonis (strain ATCC 8503 / DSM 20701 / CIP 104284 / JCM 5825 / NCTC 11152).